Consider the following 395-residue polypeptide: Carbohydrate sulfotransferase 6 (395 aa).

Residues 1-5 (MWLPR) are Cytoplasmic-facing. The chain crosses the membrane as a helical; Signal-anchor for type II membrane protein span at residues 6–26 (VSSTAVTALLLAQTFLLLFLV). Residues 27–395 (SRPGPSSPAG…ASSTASHPRN (369 aa)) are Lumenal-facing. Residue 49 to 55 (WRSGSSF) participates in 3'-phosphoadenylyl sulfate binding. Asn116 carries an N-linked (GlcNAc...) asparagine glycan. Residue 202 to 210 (RDPRAVLRS) participates in 3'-phosphoadenylyl sulfate binding. Asn229, Asn305, and Asn328 each carry an N-linked (GlcNAc...) asparagine glycan.

The protein belongs to the sulfotransferase 1 family. Gal/GlcNAc/GalNAc subfamily. As to expression, expressed in cornea. Mainly expressed in brain. Also expressed in spinal cord and trachea.

It localises to the golgi apparatus membrane. It catalyses the reaction 3'-phosphoadenylyl sulfate + keratan = adenosine 3',5'-bisphosphate + keratan 6'-sulfate.. Functionally, sulfotransferase that utilizes 3'-phospho-5'-adenylyl sulfate (PAPS) as sulfonate donor to catalyze the transfer of sulfate to position 6 of non-reducing N-acetylglucosamine (GlcNAc) residues of keratan. Cooperates with B4GALT4 galactosyltransferase and B3GNT7 N-acetylglucosaminyltransferase to construct and elongate the sulfated disaccharide unit [-&gt;3Galbeta1-&gt;4(6-sulfoGlcNAcbeta)1-&gt;] within keratan sulfate polymer. Involved in biosynthesis of keratan sulfate in cornea, with an impact on proteoglycan fibril organization and corneal transparency. Involved in sulfation of endothelial mucins such as GLYCAM1. The protein is Carbohydrate sulfotransferase 6 of Homo sapiens (Human).